The primary structure comprises 73 residues: Beta-1 adrenergic receptor (73 aa).

Residues 1-12 traverse the membrane as a helical segment; sequence ISALVSFLPILM. Residues 13 to 38 are Extracellular-facing; it reads HWWRAENDEARRCYNDPKCCDFVTNR. A disulfide bond links cysteine 25 and cysteine 31. Residues 39–64 form a helical membrane-spanning segment; that stretch reads AYAIASSVVSFYVPLCIMAFVYLRVF. Cyanopindolol is bound at residue serine 44. Residues 65–73 are Cytoplasmic-facing; sequence REAQKQVKK.

The protein belongs to the G-protein coupled receptor 1 family. Adrenergic receptor subfamily. ADRB1 sub-subfamily. In terms of assembly, interacts (via C-terminus PDZ motif) with RAPGEF2; the interaction is direct. Interacts with GOPC, MAGI3 and DLG4. Homologous desensitization of the receptor is mediated by its phosphorylation by beta-adrenergic receptor kinase.

Its subcellular location is the cell membrane. The protein resides in the early endosome. In terms of biological role, beta-adrenergic receptors mediate the catecholamine-induced activation of adenylate cyclase through the action of G proteins. This receptor binds epinephrine and norepinephrine with approximately equal affinity. Mediates Ras activation through G(s)-alpha- and cAMP-mediated signaling. In dorsal pons neurons, involved in the regulation of sleep/wake behaviors. The protein is Beta-1 adrenergic receptor (ADRB1) of Meriones unguiculatus (Mongolian jird).